A 432-amino-acid polypeptide reads, in one-letter code: 2-oxoglutarate-dependent dioxygenase AOP2 (432 aa).

In terms of domain architecture, Fe2OG dioxygenase spans 281–378 (SGDDVEANDD…RYTAAIFTCP (98 aa)). Residues His301, Asp303, and His358 each contribute to the Fe cation site. A 2-oxoglutarate-binding site is contributed by Arg369.

The protein belongs to the iron/ascorbate-dependent oxidoreductase family. Requires Fe(2+) as cofactor.

2-oxoglutarate-dependent dioxygenase involved in glucosinolates biosynthesis. Catalyzes the conversion of methylsulfinylalkyl glucosinolates to alkenyl glucosinolates. The chain is 2-oxoglutarate-dependent dioxygenase AOP2 (AOP2) from Arabidopsis thaliana (Mouse-ear cress).